The primary structure comprises 387 residues: Cytochrome b (387 aa).

A run of 4 helical transmembrane segments spans residues 32–52, 76–98, 113–133, and 179–199; these read FGSL…LLAC, FLLR…LHIG, TWNI…LGYC, and FFSL…MHLI. His82 and His96 together coordinate heme b. Positions 183 and 197 each coordinate heme b. His202 provides a ligand contact to a ubiquinone. A run of 4 helical transmembrane segments spans residues 225–245, 289–309, 321–341, and 348–368; these read YLIK…YMAF, QLGV…PLLD, FGKF…WIGG, and FITI…ILIP.

It belongs to the cytochrome b family. As to quaternary structure, fungal cytochrome b-c1 complex contains 10 subunits; 3 respiratory subunits, 2 core proteins and 5 low-molecular weight proteins. Cytochrome b-c1 complex is a homodimer. Requires heme b as cofactor.

It is found in the mitochondrion inner membrane. Its function is as follows. Component of the ubiquinol-cytochrome c reductase complex (complex III or cytochrome b-c1 complex) that is part of the mitochondrial respiratory chain. The b-c1 complex mediates electron transfer from ubiquinol to cytochrome c. Contributes to the generation of a proton gradient across the mitochondrial membrane that is then used for ATP synthesis. This chain is Cytochrome b (cob), found in Schizosaccharomyces pombe (strain 972 / ATCC 24843) (Fission yeast).